A 400-amino-acid polypeptide reads, in one-letter code: MNFEIKDTNIRKIFDSRGNFSAEVTVILENASGTASAPAGASTGKTEVIAYPDNNIDNGIDFFYRHVKKALKGFNSINQEGLDRMLHEIDGTDNFSNLGGNIATAISIANAKAVSNALGIPMYRYVGGINYSMPRPIGNVIGGGKHSKNGTTIQEFLVSAQGKTVLDSIYYNILIHRRIGEILSGMFKNQSIGLGDEKAWTCDISDEDAIEIIKNASKDISSEYKIKVLNGVDFAADSFYDGNYYIYKNRKLTRDQQIDYAISISRDHGFYYIEDPLNDQDFDGFSEITSKVGDKSLIVGDDLYTTNPERIKKGIEKRSTNGVLIKVNQIGTLSDTARSVRIATEHGLKTVVSHRSGETTDDFIAHLAVAFGSPLIKTGTIGGERLAKLNELIRIEEELI.

Gln-154 is a (2R)-2-phosphoglycerate binding site. The Proton donor role is filled by Glu-197. Residues Asp-233, Glu-274, and Asp-301 each contribute to the Mg(2+) site. Positions 326, 355, 356, and 377 each coordinate (2R)-2-phosphoglycerate. Lys-326 functions as the Proton acceptor in the catalytic mechanism.

It belongs to the enolase family. The cofactor is Mg(2+).

It localises to the cytoplasm. The protein localises to the secreted. Its subcellular location is the cell surface. The catalysed reaction is (2R)-2-phosphoglycerate = phosphoenolpyruvate + H2O. Its pathway is carbohydrate degradation; glycolysis; pyruvate from D-glyceraldehyde 3-phosphate: step 4/5. Catalyzes the reversible conversion of 2-phosphoglycerate (2-PG) into phosphoenolpyruvate (PEP). It is essential for the degradation of carbohydrates via glycolysis. The sequence is that of Enolase from Picrophilus torridus (strain ATCC 700027 / DSM 9790 / JCM 10055 / NBRC 100828 / KAW 2/3).